A 251-amino-acid chain; its full sequence is Imidazole glycerol phosphate synthase subunit HisF (251 aa).

Catalysis depends on residues Asp12 and Asp131.

The protein belongs to the HisA/HisF family. In terms of assembly, heterodimer of HisH and HisF.

It localises to the cytoplasm. It catalyses the reaction 5-[(5-phospho-1-deoxy-D-ribulos-1-ylimino)methylamino]-1-(5-phospho-beta-D-ribosyl)imidazole-4-carboxamide + L-glutamine = D-erythro-1-(imidazol-4-yl)glycerol 3-phosphate + 5-amino-1-(5-phospho-beta-D-ribosyl)imidazole-4-carboxamide + L-glutamate + H(+). It functions in the pathway amino-acid biosynthesis; L-histidine biosynthesis; L-histidine from 5-phospho-alpha-D-ribose 1-diphosphate: step 5/9. IGPS catalyzes the conversion of PRFAR and glutamine to IGP, AICAR and glutamate. The HisF subunit catalyzes the cyclization activity that produces IGP and AICAR from PRFAR using the ammonia provided by the HisH subunit. The chain is Imidazole glycerol phosphate synthase subunit HisF from Streptomyces avermitilis (strain ATCC 31267 / DSM 46492 / JCM 5070 / NBRC 14893 / NCIMB 12804 / NRRL 8165 / MA-4680).